Reading from the N-terminus, the 154-residue chain is Deoxyuridine 5'-triphosphate nucleotidohydrolase (154 aa).

Substrate-binding positions include 64-66 (RSG), Asn-77, 81-83 (TID), and Lys-91.

The protein belongs to the dUTPase family. In terms of assembly, homotrimer. Mg(2+) is required as a cofactor.

It catalyses the reaction dUTP + H2O = dUMP + diphosphate + H(+). Its pathway is pyrimidine metabolism; dUMP biosynthesis; dUMP from dCTP (dUTP route): step 2/2. Functionally, this enzyme is involved in nucleotide metabolism: it produces dUMP, the immediate precursor of thymidine nucleotides and it decreases the intracellular concentration of dUTP so that uracil cannot be incorporated into DNA. The sequence is that of Deoxyuridine 5'-triphosphate nucleotidohydrolase from Mycobacterium bovis (strain BCG / Pasteur 1173P2).